Consider the following 245-residue polypeptide: 3-deoxy-manno-octulosonate cytidylyltransferase (245 aa).

The protein belongs to the KdsB family.

It is found in the cytoplasm. The catalysed reaction is 3-deoxy-alpha-D-manno-oct-2-ulosonate + CTP = CMP-3-deoxy-beta-D-manno-octulosonate + diphosphate. The protein operates within nucleotide-sugar biosynthesis; CMP-3-deoxy-D-manno-octulosonate biosynthesis; CMP-3-deoxy-D-manno-octulosonate from 3-deoxy-D-manno-octulosonate and CTP: step 1/1. It functions in the pathway bacterial outer membrane biogenesis; lipopolysaccharide biosynthesis. In terms of biological role, activates KDO (a required 8-carbon sugar) for incorporation into bacterial lipopolysaccharide in Gram-negative bacteria. This is 3-deoxy-manno-octulosonate cytidylyltransferase from Fusobacterium nucleatum subsp. nucleatum (strain ATCC 25586 / DSM 15643 / BCRC 10681 / CIP 101130 / JCM 8532 / KCTC 2640 / LMG 13131 / VPI 4355).